Consider the following 810-residue polypeptide: S-adenosyl-L-methionine-dependent tRNA 4-demethylwyosine synthase (810 aa).

2 disordered regions span residues 86 to 116 (NGGGKGGGCCSSKGGKKGGCCSSKGGKKGGC) and 156 to 176 (RSSTPKVFSKNSSSNSRVGKK). Over residues 104–116 (GCCSSKGGKKGGC) the composition is skewed to low complexity. Over residues 159–172 (TPKVFSKNSSSNSR) the composition is skewed to polar residues. In terms of domain architecture, Flavodoxin-like spans 205 to 360 (IYVLYSSLQG…KIDEWTSLLA (156 aa)). FMN is bound by residues 211 to 215 (SLQGA) and 304 to 337 (VLGLGDSESWPEKFCYQAKRADHWISRLGGRRIF). Residues 374–397 (DENADSEEDEEEGNGSDELGDVED) show a composition bias toward acidic residues. Residues 374–407 (DENADSEEDEEEGNGSDELGDVEDIGGKGSNGKF) form a disordered region. One can recognise a Radical SAM core domain in the interval 463 to 713 (FNIASSRCME…ELQRRGLHYD (251 aa)). [4Fe-4S] cluster is bound by residues Cys-479, Cys-483, and Cys-486. Residue Lys-496 forms a Glycyl lysine isopeptide (Lys-Gly) (interchain with G-Cter in ubiquitin) linkage. The segment at 782–810 (RVYRKDKKKQNKENQETTTRETPLPPIPA) is disordered.

It belongs to the TYW1 family. [4Fe-4S] cluster serves as cofactor.

It is found in the endoplasmic reticulum. It catalyses the reaction N(1)-methylguanosine(37) in tRNA(Phe) + pyruvate + S-adenosyl-L-methionine = 4-demethylwyosine(37) in tRNA(Phe) + 5'-deoxyadenosine + L-methionine + CO2 + H2O. It functions in the pathway tRNA modification; wybutosine-tRNA(Phe) biosynthesis. Functionally, component of the wybutosine biosynthesis pathway. Wybutosine is a hyper modified guanosine with a tricyclic base found at the 3'-position adjacent to the anticodon of eukaryotic phenylalanine tRNA. Catalyzes the condensation of N-methylguanine with 2 carbon atoms from pyruvate to form the tricyclic 4-demethylwyosine, an intermediate in wybutosine biosynthesis. The polypeptide is S-adenosyl-L-methionine-dependent tRNA 4-demethylwyosine synthase (TYW1) (Saccharomyces cerevisiae (strain ATCC 204508 / S288c) (Baker's yeast)).